The chain runs to 144 residues: MFWGALLSMERPTSVRDLCMSLKLSLLDLSLACKFCGNNITNIEKLLFDKAGFQLIWRENNAFGCCQYCARVCSVVEQCFGSHRHLTSEELVNVTKTLQQLSLRCLGCLSILSEADKELCAELNDFSVVRGKTRGLCSLCRLPP.

2 zinc fingers span residues 33–69 (CKFCGNNITNIEKLLFDKAGFQLIWRENNAFGCCQYC) and 105–140 (CLGCLSILSEADKELCAELNDFSVVRGKTRGLCSLC).

Belongs to the papillomaviridae E6 protein family. Forms homodimers. Interacts with ubiquitin-protein ligase UBE3A/E6-AP; this interaction stimulates UBE3A ubiquitin activity. Interacts with host BAK1.

Its subcellular location is the host cytoplasm. The protein resides in the host nucleus. In terms of biological role, plays a major role in the induction and maintenance of cellular transformation. E6 associates with host UBE3A/E6-AP ubiquitin-protein ligase and modulates its activity. Protects host keratinocytes from apoptosis by mediating the degradation of host BAK1. May also inhibit host immune response. This chain is Protein E6, found in Canine oral papillomavirus (strain Y62) (COPV).